Reading from the N-terminus, the 113-residue chain is Hydrogenase maturation factor HypA 2 (113 aa).

His2 serves as a coordination point for Ni(2+). The Zn(2+) site is built by Cys73, Cys76, Cys89, and Cys92.

It belongs to the HypA/HybF family.

Its function is as follows. Involved in the maturation of [NiFe] hydrogenases. Required for nickel insertion into the metal center of the hydrogenase. The chain is Hydrogenase maturation factor HypA 2 from Bradyrhizobium diazoefficiens (strain JCM 10833 / BCRC 13528 / IAM 13628 / NBRC 14792 / USDA 110).